The chain runs to 238 residues: Orotidine 5'-phosphate decarboxylase (238 aa).

Substrate is bound by residues aspartate 10, lysine 32, 59–68, threonine 122, arginine 184, glutamine 193, glycine 213, and arginine 214; that span reads DLKLHDIPNT. The active-site Proton donor is the lysine 61.

It belongs to the OMP decarboxylase family. Type 1 subfamily. Homodimer.

It carries out the reaction orotidine 5'-phosphate + H(+) = UMP + CO2. Its pathway is pyrimidine metabolism; UMP biosynthesis via de novo pathway; UMP from orotate: step 2/2. Catalyzes the decarboxylation of orotidine 5'-monophosphate (OMP) to uridine 5'-monophosphate (UMP). This chain is Orotidine 5'-phosphate decarboxylase, found in Bacillus cereus (strain Q1).